A 332-amino-acid chain; its full sequence is MKIYYDQDADLQYLDGKTVAVIGYGSQGHAQSQNLRDSGVKVVVADIPSSENWKKAEEAQFQPLTADEAAREADIIQILVPDEKQAALYRESIAPNLRPGKALVFSHGFNIHFKQIVPPPDVDVFMVAPKGPGHLVRRMYEEGAGVPSLVAVEQDYSGQALNLALAYAKGIGATRAGVIQTTFKEETETDLFGEQAVLCGGITELIRAGFDTLVDAGYQPEIAYFECLHEMKLIVDLIYEGGISTMRYSISDTAEYGDLTRGKRIITEATREEMKKILKEIQDGVFAREWLLENQVGRPVYNALRRKEQNHLIETVGARLRGMMPWLKKKVI.

A KARI N-terminal Rossmann domain is found at 1 to 181 (MKIYYDQDAD…GATRAGVIQT (181 aa)). Residues 24–27 (YGSQ), S50, and 82–85 (DEKQ) contribute to the NAD(+) site. The active site involves H107. NAD(+) is bound at residue G133. The region spanning 182-327 (TFKEETETDL…ARLRGMMPWL (146 aa)) is the KARI C-terminal knotted domain. Residues D190, E194, E226, and E230 each contribute to the Mg(2+) site. S251 is a substrate binding site.

This sequence belongs to the ketol-acid reductoisomerase family. Mg(2+) serves as cofactor.

It carries out the reaction (2R)-2,3-dihydroxy-3-methylbutanoate + NAD(+) = (2S)-2-acetolactate + NADH + H(+). It functions in the pathway amino-acid biosynthesis; L-isoleucine biosynthesis; L-isoleucine from 2-oxobutanoate: step 2/4. The protein operates within amino-acid biosynthesis; L-valine biosynthesis; L-valine from pyruvate: step 2/4. Its function is as follows. Involved in the biosynthesis of branched-chain amino acids (BCAA). Catalyzes an alkyl-migration followed by a ketol-acid reduction of (S)-2-acetolactate (S2AL) to yield (R)-2,3-dihydroxy-isovalerate. In the isomerase reaction, S2AL is rearranged via a Mg-dependent methyl migration to produce 3-hydroxy-3-methyl-2-ketobutyrate (HMKB). In the reductase reaction, this 2-ketoacid undergoes a metal-dependent reduction by NADH to yield (R)-2,3-dihydroxy-isovalerate. The protein is Ketol-acid reductoisomerase (NAD(+)) of Thermacetogenium phaeum (strain ATCC BAA-254 / DSM 26808 / PB).